The following is a 484-amino-acid chain: MSGGLFIDGVWRAGAGAQATSVDPTTGEVIWRQATASTAEVAAAVEAARKAFPAWADRSREERIAVLRRYKDVLVARTGTFAEALSRETGKALWETKAELGSMAGKVEASIKAYDERTGEHANDMAFGRAVLRHRAHGVMAVLGPFNFPGHLPNGHIVPALLAGDTVVFKPSEETPLAGQLLVEALEEAGVPAGVINLVQGGREVGQALIDQEIDGLLFTGSAAAGAFFRRHFADRPDVILALELGGNNPLVVWDAGDPEAVAALIVQSAFITTGQRCSCARRLIVSDDAAGRAVIDAVAALSERLVIGPWNGGQEPFMGPLISDRAAAMALAGAKAMPGQTLRAMTSVDGLSRAFVSPGLVDVTGETVPDEELFAPLLQVRRVGSFEEAIAAANATRYGLSAGLVSNETAHWDRFLTRIRAGVVNWNRPTTGAAGTMPFGGLGNSGNHRPSAYYAADYCAYPVASFEAENVTNTLGDIKGLRA.

NAD(+) is bound at residue 221 to 226 (GSAAAG). Catalysis depends on residues E244 and C278.

Belongs to the aldehyde dehydrogenase family. AstD subfamily.

It catalyses the reaction N-succinyl-L-glutamate 5-semialdehyde + NAD(+) + H2O = N-succinyl-L-glutamate + NADH + 2 H(+). Its pathway is amino-acid degradation; L-arginine degradation via AST pathway; L-glutamate and succinate from L-arginine: step 4/5. Functionally, catalyzes the NAD-dependent reduction of succinylglutamate semialdehyde into succinylglutamate. In Caulobacter sp. (strain K31), this protein is N-succinylglutamate 5-semialdehyde dehydrogenase.